Reading from the N-terminus, the 994-residue chain is Transposase for transposon Tn2501 (994 aa).

It belongs to the transposase 7 family.

Functionally, required for transposition of transposon Tn2501. The chain is Transposase for transposon Tn2501 (tnpA) from Escherichia coli.